The primary structure comprises 306 residues: Methionyl-tRNA formyltransferase (306 aa).

108–111 (SLLP) contacts (6S)-5,6,7,8-tetrahydrofolate.

This sequence belongs to the Fmt family.

It catalyses the reaction L-methionyl-tRNA(fMet) + (6R)-10-formyltetrahydrofolate = N-formyl-L-methionyl-tRNA(fMet) + (6S)-5,6,7,8-tetrahydrofolate + H(+). Attaches a formyl group to the free amino group of methionyl-tRNA(fMet). The formyl group appears to play a dual role in the initiator identity of N-formylmethionyl-tRNA by promoting its recognition by IF2 and preventing the misappropriation of this tRNA by the elongation apparatus. This Arthrobacter sp. (strain FB24) protein is Methionyl-tRNA formyltransferase.